Reading from the N-terminus, the 315-residue chain is Protein FRA10AC1 homolog (315 aa).

Met-1 carries the post-translational modification N-acetylmethionine. The interval 1-28 is disordered; the sequence is MHGHGGYDSDFSDDEQGGGSSKKRKKTV. Ser-9 and Ser-12 each carry phosphoserine. Lys-36 is modified (N6-acetyllysine). Residues 225–235 show a composition bias toward basic residues; the sequence is KEIKSTKKKSK. The disordered stretch occupies residues 225 to 308; that stretch reads KEIKSTKKKS…EKSQEEEFDD (84 aa). Basic and acidic residues-rich tracts occupy residues 236–245 and 255–278; these read TTPECDESPR and EASK…NRNA. A phosphoserine mark is found at Ser-283 and Ser-285.

As to quaternary structure, interacts with ESS2.

The protein resides in the nucleus. Its function is as follows. May be involved in pre-mRNA splicing. The protein is Protein FRA10AC1 homolog (Fra10ac1) of Mus musculus (Mouse).